Reading from the N-terminus, the 65-residue chain is Large ribosomal subunit protein bL35 (65 aa).

Residues 1–26 are disordered; sequence MPKIKTVRGAAKRFKKTASGGFKRKQ. The span at 10–26 shows a compositional bias: basic residues; that stretch reads AAKRFKKTASGGFKRKQ.

Belongs to the bacterial ribosomal protein bL35 family.

This Haemophilus ducreyi (strain 35000HP / ATCC 700724) protein is Large ribosomal subunit protein bL35.